Reading from the N-terminus, the 352-residue chain is N-acetyl-gamma-glutamyl-phosphate reductase (352 aa).

Residue C158 is part of the active site.

It belongs to the NAGSA dehydrogenase family. Type 1 subfamily.

It is found in the cytoplasm. It carries out the reaction N-acetyl-L-glutamate 5-semialdehyde + phosphate + NADP(+) = N-acetyl-L-glutamyl 5-phosphate + NADPH + H(+). Its pathway is amino-acid biosynthesis; L-arginine biosynthesis; N(2)-acetyl-L-ornithine from L-glutamate: step 3/4. In terms of biological role, catalyzes the NADPH-dependent reduction of N-acetyl-5-glutamyl phosphate to yield N-acetyl-L-glutamate 5-semialdehyde. The protein is N-acetyl-gamma-glutamyl-phosphate reductase of Mycobacterium bovis (strain BCG / Tokyo 172 / ATCC 35737 / TMC 1019).